Consider the following 1410-residue polypeptide: Non-secreted LysM effector LysM15 (1410 aa).

2 consecutive LysM domains span residues 1179–1225 (TTYT…DICM) and 1231–1277 (TQYT…EILG). Over residues 1291–1303 (TTGDGITTTPGNG) the composition is skewed to low complexity. Residues 1291-1317 (TTGDGITTTPGNGEYAQGVVSPPENST) form a disordered region. Positions 1328-1375 (RWYSATADDLCVQICLKSGVSAKLFKAANPSLAADCDNSLIAGDAYCV) constitute a LysM 3 domain.

Belongs to the secreted LysM effector family.

Non-secreted LysM effector that might be involved in manipulation of host defenses for successful infection. The chain is Non-secreted LysM effector LysM15 from Penicillium expansum (Blue mold rot fungus).